Consider the following 495-residue polypeptide: Cobyric acid synthase (495 aa).

A GATase cobBQ-type domain is found at 256–444 (KVNVAVVLLR…VHGILDNPSV (189 aa)). Cys-337 acts as the Nucleophile in catalysis. His-436 is a catalytic residue.

Belongs to the CobB/CobQ family. CobQ subfamily.

It functions in the pathway cofactor biosynthesis; adenosylcobalamin biosynthesis. Catalyzes amidations at positions B, D, E, and G on adenosylcobyrinic A,C-diamide. NH(2) groups are provided by glutamine, and one molecule of ATP is hydrogenolyzed for each amidation. This Bacteroides fragilis (strain ATCC 25285 / DSM 2151 / CCUG 4856 / JCM 11019 / LMG 10263 / NCTC 9343 / Onslow / VPI 2553 / EN-2) protein is Cobyric acid synthase.